A 114-amino-acid polypeptide reads, in one-letter code: Protein S100-A9 (114 aa).

Threonine 2 carries the post-translational modification Blocked amino end (Thr). The residue at position 3 (cysteine 3) is an S-nitrosocysteine; transient. 2 EF-hand domains span residues 12–47 and 54–89; these read IETI…DLQN and KNEK…LTWA. Residue histidine 20 participates in Zn(2+) binding. Ca(2+) contacts are provided by serine 23, leucine 26, and histidine 28. Residue aspartate 30 participates in Zn(2+) binding. Residues threonine 31, glutamate 36, aspartate 67, asparagine 69, aspartate 71, glutamine 73, and glutamate 78 each contribute to the Ca(2+) site. 2 residues coordinate Zn(2+): histidine 91 and histidine 95. Residues 93–102 show a composition bias toward basic and acidic residues; sequence KMHEGDEGPG. The interval 93–114 is disordered; that stretch reads KMHEGDEGPGHHHKPGLGEGTP. Pros-methylhistidine is present on histidine 105. Position 113 is a phosphothreonine; by MAPK14 (threonine 113).

In terms of assembly, homodimer. Preferentially exists as a heterodimer or heterotetramer with S100A8 known as calprotectin (S100A8/A9). S100A9 interacts with ATP2A2. S100A9 interacts with AGER, and with the heterodimeric complex formed by TLR4 and LY96 in the presence of calcium and/or zinc ions. S100A9 binds quinoline-3-carboxamides in the presence of calcium and/or zinc ions. S100A9 interacts with amyloid-beta protein 40. Calprotectin (S100A8/9) interacts with CEACAM3 and tubulin filaments in a calcium-dependent manner. Heterotetrameric calprotectin (S100A8/A9) interacts with ANXA6 and associates with tubulin filaments in activated monocytes. Calprotectin (S100A8/9) interacts with NCF2/P67PHOX, RAC1, RAC2, CYBA and CYBB. Calprotectin (S100A8/9) interacts with NOS2 to form the iNOS-S100A8/A9 transnitrosylase complex; induced by LDL(ox). Calprotectin (S100A8/9) interacts with CD69. In terms of processing, phosphorylated. Phosphorylation inhibits activation of tubulin polymerization. Post-translationally, S-nitrosylation of Cys-3 is implicated in LDL(ox)-induced S-nitrosylation of GAPDH at 'Cys-247' through a transnitrosylase mechanism involving a iNOS-S100A8/9 complex. Methylation at His-105 by METTL9 reduces zinc-binding without affecting heterodimerization with S100A8. As to expression, calprotectin (S100A8/9) is predominantly expressed in myeloid cells. Except for inflammatory conditions, the expression is restricted to a specific stage of myeloid differentiation since both proteins are expressed in circulating neutrophils and monocytes but are absent in normal tissue macrophages and lymphocytes. Under chronic inflammatory conditions, such as psoriasis and malignant disorders, also expressed in the epidermis. Found in high concentrations at local sites of inflammation or in the serum of patients with inflammatory diseases such as rheumatoid, cystic fibrosis, inflammatory bowel disease, Crohn's disease, giant cell arteritis, cystic fibrosis, Sjogren's syndrome, systemic lupus erythematosus, and progressive systemic sclerosis. Involved in the formation and deposition of amyloids in the aging prostate known as corpora amylacea inclusions. Strongly up-regulated in many tumors, including gastric, esophageal, colon, pancreatic, bladder, ovarian, thyroid, breast and skin cancers.

Its subcellular location is the secreted. It is found in the cytoplasm. The protein resides in the cytoskeleton. The protein localises to the cell membrane. In terms of biological role, S100A9 is a calcium- and zinc-binding protein which plays a prominent role in the regulation of inflammatory processes and immune response. It can induce neutrophil chemotaxis, adhesion, can increase the bactericidal activity of neutrophils by promoting phagocytosis via activation of SYK, PI3K/AKT, and ERK1/2 and can induce degranulation of neutrophils by a MAPK-dependent mechanism. Predominantly found as calprotectin (S100A8/A9) which has a wide plethora of intra- and extracellular functions. The intracellular functions include: facilitating leukocyte arachidonic acid trafficking and metabolism, modulation of the tubulin-dependent cytoskeleton during migration of phagocytes and activation of the neutrophilic NADPH-oxidase. Also participates in regulatory T-cell differentiation together with CD69. Activates NADPH-oxidase by facilitating the enzyme complex assembly at the cell membrane, transferring arachidonic acid, an essential cofactor, to the enzyme complex and S100A8 contributes to the enzyme assembly by directly binding to NCF2/P67PHOX. The extracellular functions involve pro-inflammatory, antimicrobial, oxidant-scavenging and apoptosis-inducing activities. Its pro-inflammatory activity includes recruitment of leukocytes, promotion of cytokine and chemokine production, and regulation of leukocyte adhesion and migration. Acts as an alarmin or a danger associated molecular pattern (DAMP) molecule and stimulates innate immune cells via binding to pattern recognition receptors such as Toll-like receptor 4 (TLR4) and receptor for advanced glycation endproducts (AGER). Binding to TLR4 and AGER activates the MAP-kinase and NF-kappa-B signaling pathways resulting in the amplification of the pro-inflammatory cascade. Has antimicrobial activity towards bacteria and fungi and exerts its antimicrobial activity probably via chelation of Zn(2+) which is essential for microbial growth. Can induce cell death via autophagy and apoptosis and this occurs through the cross-talk of mitochondria and lysosomes via reactive oxygen species (ROS) and the process involves BNIP3. Can regulate neutrophil number and apoptosis by an anti-apoptotic effect; regulates cell survival via ITGAM/ITGB and TLR4 and a signaling mechanism involving MEK-ERK. Its role as an oxidant scavenger has a protective role in preventing exaggerated tissue damage by scavenging oxidants. Can act as a potent amplifier of inflammation in autoimmunity as well as in cancer development and tumor spread. Has transnitrosylase activity; in oxidatively-modified low-densitity lipoprotein (LDL(ox))-induced S-nitrosylation of GAPDH on 'Cys-247' proposed to transfer the NO moiety from NOS2/iNOS to GAPDH via its own S-nitrosylated Cys-3. The iNOS-S100A8/A9 transnitrosylase complex is proposed to also direct selective inflammatory stimulus-dependent S-nitrosylation of multiple targets such as ANXA5, EZR, MSN and VIM by recognizing a [IL]-x-C-x-x-[DE] motif. In Homo sapiens (Human), this protein is Protein S100-A9.